Consider the following 125-residue polypeptide: Small ribosomal subunit protein bS6 (125 aa).

Residues 99–125 are disordered; it reads ASPMVKAKDERRASAEVENNDFEDAEE. Residues 104-113 are compositionally biased toward basic and acidic residues; sequence KAKDERRASA. The span at 116 to 125 shows a compositional bias: acidic residues; sequence ENNDFEDAEE.

It belongs to the bacterial ribosomal protein bS6 family.

In terms of biological role, binds together with bS18 to 16S ribosomal RNA. This Mannheimia succiniciproducens (strain KCTC 0769BP / MBEL55E) protein is Small ribosomal subunit protein bS6.